Reading from the N-terminus, the 376-residue chain is Probable allantoicase (376 aa).

This sequence belongs to the allantoicase family.

It catalyses the reaction allantoate + H2O = (S)-ureidoglycolate + urea. Its pathway is nitrogen metabolism; (S)-allantoin degradation; (S)-ureidoglycolate from allantoate (aminidohydrolase route): step 1/1. This Streptomyces coelicolor (strain ATCC BAA-471 / A3(2) / M145) protein is Probable allantoicase.